Consider the following 234-residue polypeptide: HTH-type transcriptional regulator ArcR (234 aa).

An a nucleoside 3',5'-cyclic phosphate-binding site is contributed by Val40–Asp129. The HTH crp-type domain occupies Lys155 to Leu228. Residues Ile188–His207 constitute a DNA-binding region (H-T-H motif).

Its subcellular location is the cytoplasm. Functionally, positively regulates the expression of the arcABDCR operon under anaerobic conditions, thus playing an essential role in arginine catabolism. May also control the expression of genes encoding proteins which are involved in anaerobic metabolism. Can bind cyclic AMP. The sequence is that of HTH-type transcriptional regulator ArcR (arcR) from Staphylococcus aureus (strain USA300 / TCH1516).